Reading from the N-terminus, the 127-residue chain is Aspartate 1-decarboxylase (127 aa).

The active-site Schiff-base intermediate with substrate; via pyruvic acid is Ser-25. Ser-25 carries the pyruvic acid (Ser) modification. Thr-57 serves as a coordination point for substrate. The active-site Proton donor is the Tyr-58. Position 73–75 (73–75) interacts with substrate; sequence GSA.

Belongs to the PanD family. In terms of assembly, heterooctamer of four alpha and four beta subunits. Pyruvate is required as a cofactor. In terms of processing, is synthesized initially as an inactive proenzyme, which is activated by self-cleavage at a specific serine bond to produce a beta-subunit with a hydroxyl group at its C-terminus and an alpha-subunit with a pyruvoyl group at its N-terminus.

The protein localises to the cytoplasm. The catalysed reaction is L-aspartate + H(+) = beta-alanine + CO2. Its pathway is cofactor biosynthesis; (R)-pantothenate biosynthesis; beta-alanine from L-aspartate: step 1/1. Its function is as follows. Catalyzes the pyruvoyl-dependent decarboxylation of aspartate to produce beta-alanine. The sequence is that of Aspartate 1-decarboxylase from Polaromonas naphthalenivorans (strain CJ2).